Reading from the N-terminus, the 299-residue chain is Probable lipid kinase YegS-like (299 aa).

A DAGKc domain is found at Met1–Met129. Residues Thr39, Gly65–Asp71, and Thr92 each bind ATP. 3 residues coordinate Mg(2+): Leu210, Asp213, and Leu215. Catalysis depends on Glu268, which acts as the Proton acceptor.

It belongs to the diacylglycerol/lipid kinase family. YegS lipid kinase subfamily. Mg(2+) serves as cofactor. It depends on Ca(2+) as a cofactor.

Its subcellular location is the cytoplasm. Probably phosphorylates lipids; the in vivo substrate is unknown. The chain is Probable lipid kinase YegS-like from Pseudomonas fluorescens (strain ATCC BAA-477 / NRRL B-23932 / Pf-5).